The primary structure comprises 724 residues: Protein BCH1 (724 aa).

The segment covering 51-65 (TTATASANDNGATSN) has biased composition (low complexity). The segment at 51 to 71 (TTATASANDNGATSNINGQDP) is disordered. The segment at 711 to 724 (LNFLKNFTNDTFDN) is CHS5-binding.

This sequence belongs to the CHAPS family. As to quaternary structure, component of the CHS5/6 complex composed of the 4 CHAPS proteins BCH1, BCH2, BUD7, and CHS6 as well as at least CHS5 and GTP-bound ARF1. The complex interacts with the cargo protein CHS3.

The protein resides in the golgi apparatus. It localises to the trans-Golgi network membrane. In terms of biological role, member of the CHS5-ARF1P-binding proteins (CHAPS) which mediates export of specific cargo proteins, including chitin synthase CHS3. The sequence is that of Protein BCH1 (BCH1) from Saccharomyces cerevisiae (strain ATCC 204508 / S288c) (Baker's yeast).